The primary structure comprises 521 residues: Protein DML1 (521 aa).

It belongs to the misato family.

Its subcellular location is the mitochondrion. Involved in the partitioning of the mitochondrial organelle and mitochondrial DNA (mtDNA) inheritance. The chain is Protein DML1 (DML1) from Phaeosphaeria nodorum (strain SN15 / ATCC MYA-4574 / FGSC 10173) (Glume blotch fungus).